Reading from the N-terminus, the 177-residue chain is Inner membrane-spanning protein YciB (177 aa).

Transmembrane regions (helical) follow at residues 23–43 (MFVA…WAWF), 50–70 (TMQW…LLLH), 73–93 (HFIM…LLIS), 119–139 (LTWA…FVAY), and 149–169 (FKLF…SLFL).

The protein belongs to the YciB family.

It localises to the cell inner membrane. Its function is as follows. Plays a role in cell envelope biogenesis, maintenance of cell envelope integrity and membrane homeostasis. The polypeptide is Inner membrane-spanning protein YciB (Chromobacterium violaceum (strain ATCC 12472 / DSM 30191 / JCM 1249 / CCUG 213 / NBRC 12614 / NCIMB 9131 / NCTC 9757 / MK)).